The primary structure comprises 183 residues: Translation initiation factor IF-3 (183 aa).

Over residues 1–13 (MKQPDRNQQQGAK) the composition is skewed to polar residues. Positions 1 to 21 (MKQPDRNQQQGAKSNRPAIND) are disordered.

Belongs to the IF-3 family. In terms of assembly, monomer.

The protein resides in the cytoplasm. In terms of biological role, IF-3 binds to the 30S ribosomal subunit and shifts the equilibrium between 70S ribosomes and their 50S and 30S subunits in favor of the free subunits, thus enhancing the availability of 30S subunits on which protein synthesis initiation begins. The protein is Translation initiation factor IF-3 of Acinetobacter baumannii (strain AYE).